Reading from the N-terminus, the 94-residue chain is Putative regulatory protein Sfum_3631 (94 aa).

This sequence belongs to the RemA family.

The chain is Putative regulatory protein Sfum_3631 from Syntrophobacter fumaroxidans (strain DSM 10017 / MPOB).